Reading from the N-terminus, the 392-residue chain is Enoyl-[acyl-carrier-protein] reductase [NADH] (392 aa).

NAD(+)-binding positions include 48 to 53 (GCSTGY), 74 to 75 (FE), 111 to 112 (DA), and 139 to 140 (LA). Tyr-225 contacts substrate. The active-site Proton donor is the Tyr-235. Residues Lys-244 and 273–275 (LVT) each bind NAD(+).

It belongs to the TER reductase family. Monomer.

The catalysed reaction is a 2,3-saturated acyl-[ACP] + NAD(+) = a (2E)-enoyl-[ACP] + NADH + H(+). Its pathway is lipid metabolism; fatty acid biosynthesis. Involved in the final reduction of the elongation cycle of fatty acid synthesis (FAS II). Catalyzes the reduction of a carbon-carbon double bond in an enoyl moiety that is covalently linked to an acyl carrier protein (ACP). In Idiomarina loihiensis (strain ATCC BAA-735 / DSM 15497 / L2-TR), this protein is Enoyl-[acyl-carrier-protein] reductase [NADH].